A 461-amino-acid chain; its full sequence is MKNYRIESDSFGEIQIEEKFYWGAQTQRSLNNFKISKQKMPKILIRALAILKKCAAQVNYEFGDLEYKIATSIDKAIDRILAGEFEDNFPLVVWQTGSGTQTNMNMNEVIASIANEELTGKKGGKFPVHPNDHVNKGQSSNDSFPTAMHIATVLATKQQLIPALNNLLTYLQDKSKDWDKIIKIGRTHLQDATPLTLKQEFSGYITQIEYALERIEDALKKVYLLAQGGTAVGTGINSKIGFDIKFAQKVAEFTQQPFKTAPNKFESLAAHDALVEFSGTLNTIAVSLMKIANDIRLLGSGPRCGLGELHLPENEPGSSIMPGKVNPTQVEALTMVCTQVMGNHVTVTIAGSNGHLELNVFKPVIIYNILQSIELLSDSVNSFVTHCVKGLEPNIARINTLRDKSLMLVTVLNPHIGYDNAAKIAKEAHKYGITLKEAAKKLNFLSEEEFDKIVVPEKMIS.

Substrate is bound by residues 98–100 (SGT), 129–132 (HPND), 139–141 (SSN), and Thr187. His188 (proton donor/acceptor) is an active-site residue. The active site involves Ser318. Residues Ser319 and 324 to 326 (KVN) each bind substrate.

Belongs to the class-II fumarase/aspartase family. Fumarase subfamily. In terms of assembly, homotetramer.

The protein localises to the cytoplasm. The enzyme catalyses (S)-malate = fumarate + H2O. It functions in the pathway carbohydrate metabolism; tricarboxylic acid cycle; (S)-malate from fumarate: step 1/1. Its function is as follows. Involved in the TCA cycle. Catalyzes the stereospecific interconversion of fumarate to L-malate. This chain is Fumarate hydratase class II, found in Rickettsia prowazekii (strain Madrid E).